Reading from the N-terminus, the 607-residue chain is Karyogamy meiotic segregation protein 1 (607 aa).

Residues 83–135 (DDSFANQAEKPSMEQQNSKNSIKEDANEHSVNSAHSKSSSNASPESLNPSQMM) form a disordered region. The span at 111–132 (HSVNSAHSKSSSNASPESLNPS) shows a compositional bias: low complexity.

As to quaternary structure, interacts with mcp1 and sad1.

It is found in the cytoplasm. The protein resides in the cytoskeleton. Its subcellular location is the microtubule organizing center. It localises to the spindle pole body. Its function is as follows. Has a role in karyogamy, recombination and segregation during meiosis. Although it has been shown to associate with the spindle pole body it is unlikely to be involved in its formation or maintenance. The chain is Karyogamy meiotic segregation protein 1 (kms1) from Schizosaccharomyces pombe (strain 972 / ATCC 24843) (Fission yeast).